The sequence spans 214 residues: tRNA (guanine-N(7)-)-methyltransferase (214 aa).

The S-adenosyl-L-methionine site is built by Glu43, Glu68, Asp95, and Asp117. The active site involves Asp117. Residues Lys121, Asp153, and Thr191–Glu194 contribute to the substrate site.

This sequence belongs to the class I-like SAM-binding methyltransferase superfamily. TrmB family.

The catalysed reaction is guanosine(46) in tRNA + S-adenosyl-L-methionine = N(7)-methylguanosine(46) in tRNA + S-adenosyl-L-homocysteine. Its pathway is tRNA modification; N(7)-methylguanine-tRNA biosynthesis. Functionally, catalyzes the formation of N(7)-methylguanine at position 46 (m7G46) in tRNA. This chain is tRNA (guanine-N(7)-)-methyltransferase, found in Lachnoclostridium phytofermentans (strain ATCC 700394 / DSM 18823 / ISDg) (Clostridium phytofermentans).